The sequence spans 269 residues: MTKSIRFTKMHGAGNDYIYVNTMAYPIDNPEELSIAWSKPHTGIGSDGLVLIGSSDIADFSMHIYNADGSEAMMCGNASRCIGKYVYEAGLTQKNKVTLETLSGIKELQLKIEREEVTEVTVDMGMPAVGEMALEVEAGGEIYTGTVISMGNPHLVIFVDEMDQVGLASVGPLLECLPLFPDRTNVEFVQVLKPDEVRMRVWERGSGITQACGTGACATAVAGVVRGKTKRKTKVIMDGGPLTIEWDERSGKVFMTGGAVNVFEGFIKV.

Positions 15 and 66 each coordinate substrate. C75 (proton donor) is an active-site residue. Substrate is bound by residues 76-77, N152, N185, and 203-204; these read GN and ER. C212 serves as the catalytic Proton acceptor. 213–214 provides a ligand contact to substrate; the sequence is GT.

This sequence belongs to the diaminopimelate epimerase family. Homodimer.

Its subcellular location is the cytoplasm. It catalyses the reaction (2S,6S)-2,6-diaminopimelate = meso-2,6-diaminopimelate. It participates in amino-acid biosynthesis; L-lysine biosynthesis via DAP pathway; DL-2,6-diaminopimelate from LL-2,6-diaminopimelate: step 1/1. Functionally, catalyzes the stereoinversion of LL-2,6-diaminopimelate (L,L-DAP) to meso-diaminopimelate (meso-DAP), a precursor of L-lysine and an essential component of the bacterial peptidoglycan. This Parabacteroides distasonis (strain ATCC 8503 / DSM 20701 / CIP 104284 / JCM 5825 / NCTC 11152) protein is Diaminopimelate epimerase.